Consider the following 182-residue polypeptide: NADH-quinone oxidoreductase subunit B 2 (182 aa).

[4Fe-4S] cluster-binding residues include Cys-57, Cys-58, Cys-123, and Cys-153.

It belongs to the complex I 20 kDa subunit family. In terms of assembly, NDH-1 is composed of 14 different subunits. Subunits NuoB, C, D, E, F, and G constitute the peripheral sector of the complex. The cofactor is [4Fe-4S] cluster.

The protein resides in the cell membrane. The catalysed reaction is a quinone + NADH + 5 H(+)(in) = a quinol + NAD(+) + 4 H(+)(out). NDH-1 shuttles electrons from NADH, via FMN and iron-sulfur (Fe-S) centers, to quinones in the respiratory chain. The immediate electron acceptor for the enzyme in this species is believed to be a menaquinone. Couples the redox reaction to proton translocation (for every two electrons transferred, four hydrogen ions are translocated across the cytoplasmic membrane), and thus conserves the redox energy in a proton gradient. The sequence is that of NADH-quinone oxidoreductase subunit B 2 from Symbiobacterium thermophilum (strain DSM 24528 / JCM 14929 / IAM 14863 / T).